The chain runs to 79 residues: uncharacterized protein (79 aa).

The N-terminal stretch at 1 to 33 is a signal peptide; the sequence is MRFIIRTVMLIALVWIGLLLSGYGVLIGSKENA.

This is an uncharacterized protein from Escherichia coli O157:H7.